The chain runs to 180 residues: Large ribosomal subunit protein uL6 (180 aa).

It belongs to the universal ribosomal protein uL6 family. In terms of assembly, part of the 50S ribosomal subunit.

This protein binds to the 23S rRNA, and is important in its secondary structure. It is located near the subunit interface in the base of the L7/L12 stalk, and near the tRNA binding site of the peptidyltransferase center. In Borrelia garinii subsp. bavariensis (strain ATCC BAA-2496 / DSM 23469 / PBi) (Borreliella bavariensis), this protein is Large ribosomal subunit protein uL6.